Consider the following 109-residue polypeptide: uncharacterized protein (109 aa).

This is an uncharacterized protein from Mycoplasma genitalium (strain ATCC 33530 / DSM 19775 / NCTC 10195 / G37) (Mycoplasmoides genitalium).